Reading from the N-terminus, the 218-residue chain is Lipoprotein-releasing system ATP-binding protein LolD (218 aa).

The ABC transporter domain occupies 2–218 (IKLEGITKSF…HMVDGTIKKD (217 aa)). 34 to 41 (GPSGAGKT) contributes to the ATP binding site.

This sequence belongs to the ABC transporter superfamily. Lipoprotein translocase (TC 3.A.1.125) family. As to quaternary structure, the complex is composed of two ATP-binding proteins (LolD) and two transmembrane proteins (LolC and LolE).

It localises to the cell inner membrane. Functionally, part of the ABC transporter complex LolCDE involved in the translocation of mature outer membrane-directed lipoproteins, from the inner membrane to the periplasmic chaperone, LolA. Responsible for the formation of the LolA-lipoprotein complex in an ATP-dependent manner. This is Lipoprotein-releasing system ATP-binding protein LolD from Bacteroides thetaiotaomicron (strain ATCC 29148 / DSM 2079 / JCM 5827 / CCUG 10774 / NCTC 10582 / VPI-5482 / E50).